The sequence spans 157 residues: 2-C-methyl-D-erythritol 2,4-cyclodiphosphate synthase (157 aa).

The a divalent metal cation site is built by aspartate 8 and histidine 10. 4-CDP-2-C-methyl-D-erythritol 2-phosphate-binding positions include 8-10 (DVH) and 34-35 (HS). Histidine 42 provides a ligand contact to a divalent metal cation. Residues 56–58 (DIG), 61–65 (FPDTD), 132–135 (TTTE), phenylalanine 139, and arginine 142 each bind 4-CDP-2-C-methyl-D-erythritol 2-phosphate.

It belongs to the IspF family. In terms of assembly, homotrimer. A divalent metal cation serves as cofactor.

The enzyme catalyses 4-CDP-2-C-methyl-D-erythritol 2-phosphate = 2-C-methyl-D-erythritol 2,4-cyclic diphosphate + CMP. The protein operates within isoprenoid biosynthesis; isopentenyl diphosphate biosynthesis via DXP pathway; isopentenyl diphosphate from 1-deoxy-D-xylulose 5-phosphate: step 4/6. In terms of biological role, involved in the biosynthesis of isopentenyl diphosphate (IPP) and dimethylallyl diphosphate (DMAPP), two major building blocks of isoprenoid compounds. Catalyzes the conversion of 4-diphosphocytidyl-2-C-methyl-D-erythritol 2-phosphate (CDP-ME2P) to 2-C-methyl-D-erythritol 2,4-cyclodiphosphate (ME-CPP) with a corresponding release of cytidine 5-monophosphate (CMP). This chain is 2-C-methyl-D-erythritol 2,4-cyclodiphosphate synthase, found in Pseudomonas putida (strain W619).